The following is a 106-amino-acid chain: MSNLIPGEIIPEQGEIELNLGKEVKTVTVSNSGDRPVQVGSHYHFFEANKALIFDREITLGMRLDIPAGTAIRFEPGDTTDVKLVSYSGLKNAYGFNSLVNGSLDT.

This sequence belongs to the urease beta subunit family. In terms of assembly, heterotrimer of UreA (gamma), UreB (beta) and UreC (alpha) subunits. Three heterotrimers associate to form the active enzyme.

Its subcellular location is the cytoplasm. It catalyses the reaction urea + 2 H2O + H(+) = hydrogencarbonate + 2 NH4(+). Its pathway is nitrogen metabolism; urea degradation; CO(2) and NH(3) from urea (urease route): step 1/1. The sequence is that of Urease subunit beta from Prochlorococcus marinus (strain MIT 9312).